The sequence spans 459 residues: Cysteine--tRNA ligase (459 aa).

Cysteine 28 contributes to the Zn(2+) binding site. A 'HIGH' region motif is present at residues valine 30–histidine 40. Positions 209, 234, and 238 each coordinate Zn(2+). A 'KMSKS' region motif is present at residues lysine 266–serine 270. Position 269 (lysine 269) interacts with ATP.

It belongs to the class-I aminoacyl-tRNA synthetase family. Monomer. Requires Zn(2+) as cofactor.

It localises to the cytoplasm. The catalysed reaction is tRNA(Cys) + L-cysteine + ATP = L-cysteinyl-tRNA(Cys) + AMP + diphosphate. The chain is Cysteine--tRNA ligase from Glaesserella parasuis serovar 5 (strain SH0165) (Haemophilus parasuis).